The sequence spans 211 residues: Thymidylate kinase (211 aa).

10–17 (GPDGAGKT) lines the ATP pocket.

It belongs to the thymidylate kinase family.

The enzyme catalyses dTMP + ATP = dTDP + ADP. Its function is as follows. Phosphorylation of dTMP to form dTDP in both de novo and salvage pathways of dTTP synthesis. The protein is Thymidylate kinase (tmk) of Lactococcus lactis subsp. lactis (strain IL1403) (Streptococcus lactis).